A 149-amino-acid polypeptide reads, in one-letter code: Transcriptional regulator MraZ (149 aa).

SpoVT-AbrB domains lie at 5-52 (ITTL…PLPE) and 81-124 (AEEC…DSMV).

The protein belongs to the MraZ family. In terms of assembly, forms oligomers.

It localises to the cytoplasm. Its subcellular location is the nucleoid. The polypeptide is Transcriptional regulator MraZ (Nitrosococcus oceani (strain ATCC 19707 / BCRC 17464 / JCM 30415 / NCIMB 11848 / C-107)).